The chain runs to 342 residues: Nicotinate-nucleotide--dimethylbenzimidazole phosphoribosyltransferase (342 aa).

The active-site Proton acceptor is the glutamate 311.

This sequence belongs to the CobT family.

The catalysed reaction is 5,6-dimethylbenzimidazole + nicotinate beta-D-ribonucleotide = alpha-ribazole 5'-phosphate + nicotinate + H(+). It participates in nucleoside biosynthesis; alpha-ribazole biosynthesis; alpha-ribazole from 5,6-dimethylbenzimidazole: step 1/2. Catalyzes the synthesis of alpha-ribazole-5'-phosphate from nicotinate mononucleotide (NAMN) and 5,6-dimethylbenzimidazole (DMB). This chain is Nicotinate-nucleotide--dimethylbenzimidazole phosphoribosyltransferase, found in Vibrio vulnificus (strain CMCP6).